The following is a 48-amino-acid chain: U-actitoxin-Cgg3 (48 aa).

Disulfide bonds link C5/C41, C7/C33, and C23/C42. S46 carries the post-translational modification Serine amide. The propeptide at 47 to 48 (GR) is removed in mature form.

This sequence belongs to the sea anemone type 3 (BDS) potassium channel toxin family.

The protein resides in the secreted. Neurotoxin that induces paralysis when injected into crabs. May function in antimicrobial activity as it displays inhibitory activity towards the B.licheniformis enzyme subtilisin A (SUBTA) and the recombinant S.maltophilia protease 1 (rStmPr1) enzyme. Also displays inhibitory activity against various proteases including the porcine pancreatic elastase (PPE) and proteinase K (PK). The sequence is that of U-actitoxin-Cgg3 from Condylactis gigantea (Giant Caribbean anemone).